Reading from the N-terminus, the 552-residue chain is Putative phosphate permease MT2339 (552 aa).

13 consecutive transmembrane segments (helical) span residues 38–58 (WHLS…WWAF), 69–89 (ILVL…GNDV), 107–127 (ALLV…GDVT), 146–166 (DFMN…LFAN), 178–198 (IIGG…QGGA), 213–233 (VSWV…YGVI), 326–346 (VPLV…FKGF), 360–380 (FIIA…AKTL), 389–409 (TFLM…FSHG), 437–457 (AVPA…LWFI), 472–492 (MHPA…MGAT), 493–513 (VLGL…GVGI), and 526–546 (IVLA…VGLV).

Belongs to the inorganic phosphate transporter (PiT) (TC 2.A.20) family.

The protein resides in the cell membrane. In terms of biological role, potential transporter for phosphate. The sequence is that of Putative phosphate permease MT2339 from Mycobacterium tuberculosis (strain CDC 1551 / Oshkosh).